The following is a 346-amino-acid chain: Biotin synthase (346 aa).

The region spanning 38 to 256 (KQIQVSTLLS…IAVARIMMPT (219 aa)) is the Radical SAM core domain. Positions 53, 57, and 60 each coordinate [4Fe-4S] cluster. [2Fe-2S] cluster-binding residues include C97, C128, C188, and R260.

Belongs to the radical SAM superfamily. Biotin synthase family. As to quaternary structure, homodimer. [4Fe-4S] cluster serves as cofactor. Requires [2Fe-2S] cluster as cofactor.

It catalyses the reaction (4R,5S)-dethiobiotin + (sulfur carrier)-SH + 2 reduced [2Fe-2S]-[ferredoxin] + 2 S-adenosyl-L-methionine = (sulfur carrier)-H + biotin + 2 5'-deoxyadenosine + 2 L-methionine + 2 oxidized [2Fe-2S]-[ferredoxin]. The protein operates within cofactor biosynthesis; biotin biosynthesis; biotin from 7,8-diaminononanoate: step 2/2. Catalyzes the conversion of dethiobiotin (DTB) to biotin by the insertion of a sulfur atom into dethiobiotin via a radical-based mechanism. This chain is Biotin synthase, found in Salmonella arizonae (strain ATCC BAA-731 / CDC346-86 / RSK2980).